Reading from the N-terminus, the 164-residue chain is Endoribonuclease YbeY (164 aa).

H117, H121, and H127 together coordinate Zn(2+).

Belongs to the endoribonuclease YbeY family. It depends on Zn(2+) as a cofactor.

Its subcellular location is the cytoplasm. In terms of biological role, single strand-specific metallo-endoribonuclease involved in late-stage 70S ribosome quality control and in maturation of the 3' terminus of the 16S rRNA. This is Endoribonuclease YbeY from Mycoplasma mycoides subsp. mycoides SC (strain CCUG 32753 / NCTC 10114 / PG1).